The sequence spans 124 residues: Cytochrome c2 (124 aa).

At Gln-1 the chain carries Pyrrolidone carboxylic acid. Residues Cys-15, Cys-18, His-19, and Met-100 each contribute to the heme c site.

In terms of processing, binds 1 heme c group covalently per subunit.

The protein resides in the periplasm. Cytochrome c2 is found mainly in purple, non-sulfur, photosynthetic bacteria where it functions as the electron donor to the oxidized bacteriochlorophyll in the photophosphorylation pathway. However, it may also have a role in the respiratory chain and is found in some non-photosynthetic bacteria. This chain is Cytochrome c2 (cycA), found in Cereibacter sphaeroides (Rhodobacter sphaeroides).